A 666-amino-acid polypeptide reads, in one-letter code: Long chain acyl-CoA synthetase 4 (666 aa).

228 to 239 (IMYTSGTTGDPK) contributes to the ATP binding site. A fatty acid-binding region spans residues 495–519 (DGWLHTGDVGEWQPDGSMKIIDRKK).

Belongs to the ATP-dependent AMP-binding enzyme family. The cofactor is Mg(2+).

The enzyme catalyses a long-chain fatty acid + ATP + CoA = a long-chain fatty acyl-CoA + AMP + diphosphate. The protein operates within lipid metabolism; fatty acid metabolism. Its function is as follows. Activation of long-chain fatty acids for both synthesis of cellular lipids, and degradation via beta-oxidation. Preferentially uses palmitate, palmitoleate, oleate and linoleate. This Arabidopsis thaliana (Mouse-ear cress) protein is Long chain acyl-CoA synthetase 4 (LACS4).